The primary structure comprises 264 residues: ATP synthase subunit a (264 aa).

5 consecutive transmembrane segments (helical) span residues 39 to 59, 97 to 117, 139 to 159, 205 to 225, and 239 to 259; these read LDTLIISVVLGALFILIFYII, VAPLALTIFIWVFLMNFMDLV, TADPTLTFAMSITVFVLVVFY, LFGNLFAGELIFILIALLPWW, and LLVITVQAFIFMMLTVVYISL.

This sequence belongs to the ATPase A chain family. F-type ATPases have 2 components, CF(1) - the catalytic core - and CF(0) - the membrane proton channel. CF(1) has five subunits: alpha(3), beta(3), gamma(1), delta(1), epsilon(1). CF(0) has three main subunits: a(1), b(2) and c(9-12). The alpha and beta chains form an alternating ring which encloses part of the gamma chain. CF(1) is attached to CF(0) by a central stalk formed by the gamma and epsilon chains, while a peripheral stalk is formed by the delta and b chains.

It is found in the cell inner membrane. In terms of biological role, key component of the proton channel; it plays a direct role in the translocation of protons across the membrane. The protein is ATP synthase subunit a of Coxiella burnetii (strain CbuG_Q212) (Coxiella burnetii (strain Q212)).